We begin with the raw amino-acid sequence, 117 residues long: Large ribosomal subunit protein eL34 (117 aa).

Belongs to the eukaryotic ribosomal protein eL34 family. Component of the large ribosomal subunit.

The protein localises to the cytoplasm. It localises to the cytosol. It is found in the endoplasmic reticulum. In terms of biological role, component of the large ribosomal subunit. The ribosome is a large ribonucleoprotein complex responsible for the synthesis of proteins in the cell. The sequence is that of Large ribosomal subunit protein eL34 (rpl34) from Ictalurus punctatus (Channel catfish).